Consider the following 222-residue polypeptide: Large ribosomal subunit protein mL64 (222 aa).

Disordered stretches follow at residues 1–51 (MAAP…PRWQ), 136–170 (RRQQ…HVDP), and 182–222 (LEKQ…TPDS). Positions 141-170 (ARREKAQADKERRARLQAEAQERLGYHVDP) are enriched in basic and acidic residues. Residues 144–213 (EKAQADKERR…AAMAAAAAQD (70 aa)) adopt a coiled-coil conformation. The Nuclear localization signal motif lies at 184-200 (KQHRKRLKEEKQRKKKE). Over residues 203–212 (AAAMAAAAAQ) the composition is skewed to low complexity.

This sequence belongs to the mitochondrion-specific ribosomal protein mL64 family. As to quaternary structure, component of the mitochondrial ribosome large subunit (39S) which comprises a 16S rRNA and about 50 distinct proteins. Interacts with GADD45A, GADD45B and GADD45G. Interacts with NR4A1 via the NR4A1 AB domain. Interacts with ATAD3A and ATAD3B.

The protein resides in the mitochondrion. It localises to the nucleus. In terms of biological role, acts as a negative regulator of G1 to S cell cycle phase progression by inhibiting cyclin-dependent kinases. Inhibitory effects are additive with GADD45 proteins but also occur in the absence of GADD45 proteins. Acts as a repressor of the orphan nuclear receptor NR4A1 by inhibiting AB domain-mediated transcriptional activity. May be involved in the hormone-mediated regulation of NR4A1 transcriptional activity. May play a role in mitochondrial protein synthesis. This is Large ribosomal subunit protein mL64 (GADD45GIP1) from Bos taurus (Bovine).